Here is a 714-residue protein sequence, read N- to C-terminus: ABC transporter B family member 28 (714 aa).

The next 5 helical transmembrane spans lie at 109 to 129, 161 to 181, 240 to 260, 340 to 360, and 361 to 381; these read LSVCLLTLLGCSTCTLSMPVF, IFTIAFVTNMTAIWENVMAIL, ICILFTLSPQLAPVLGLLMLA, VAVYISLLALYCLGGSKVKTG, and ELAVGTVVSFIGYTFTLTFAV. In terms of domain architecture, ABC transmembrane type-1 spans 109–393; that stretch reads LSVCLLTLLG…LVNTFGDLRG (285 aa). Positions 470-708 constitute an ABC transporter domain; that stretch reads VCLDDVHFAY…KGSYASLVGT (239 aa). 505–512 contacts ATP; the sequence is GSSGAGKS.

The protein belongs to the ABC transporter superfamily. ABCB family. Multidrug resistance exporter (TC 3.A.1.201) subfamily.

Its subcellular location is the membrane. This Arabidopsis thaliana (Mouse-ear cress) protein is ABC transporter B family member 28 (ABCB28).